We begin with the raw amino-acid sequence, 1147 residues long: Protein lin-41 (1147 aa).

The disordered stretch occupies residues Met1–Gln93. Residues Ser33–Asp47 show a composition bias toward low complexity. Residues Ser48–Asn65 are compositionally biased toward basic and acidic residues. The segment covering Pro84–Gln93 has biased composition (low complexity). Residues Cys114–Gly155 form an RING-type zinc finger. Residues Met366 to Leu412 form a B box-type; atypical zinc finger. Zn(2+)-binding residues include Cys371, Cys374, Cys394, and His398. Positions Ala565–Lys618 form a coiled coil. The Filamin repeat unit spans residues Ala723–Ile817. NHL repeat units lie at residues Ile832–Asp875, Ile879–Asn922, Leu926–Gln969, Arg974–Arg1017, Met1022–Asp1065, and Ser1107–Phe1147. A disordered region spans residues Ala1104 to Pro1123.

Belongs to the TRIM/RBCC family.

Its subcellular location is the cytoplasm. The protein resides in the P-body. Heterochronic protein which acts downstream of let-7 in temporal patterning. Plays a role in the developmental timing of postembryonic hypodermal seam cell division and fusion events and adult alae production. Represses lin-29 during late larval stages, which prevents terminal differentiation of hypodermal seam cells and promotes their division. Involved in post-transcriptional gene regulation, uses two independent pathways. Has direct and specific RNA-binding activity and, depending on the location (5'UTR or 3'UTR) of the target site, triggers either mRNA decay or repression of translation. Degrades the mRNA of transcription factor dmd-3 to govern the timing and extent of male tail tip morphogenesis. Plays a role in the sexual maturation of the nervous system. The polypeptide is Protein lin-41 (Caenorhabditis elegans).